A 310-amino-acid chain; its full sequence is Imidazolonepropionase (310 aa).

Residues tyrosine 42 and histidine 75 each coordinate 4-imidazolone-5-propanoate. Tyrosine 42 is a binding site for N-formimidoyl-L-glutamate. Residue histidine 140 participates in Fe(3+) binding. Position 140 (histidine 140) interacts with Zn(2+). A 4-imidazolone-5-propanoate-binding site is contributed by glutamate 143. Aspartate 215 contributes to the Fe(3+) binding site. Aspartate 215 serves as a coordination point for Zn(2+). 2 residues coordinate N-formimidoyl-L-glutamate: asparagine 217 and glycine 219. Residue serine 220 coordinates 4-imidazolone-5-propanoate.

It belongs to the metallo-dependent hydrolases superfamily. HutI family. The cofactor is Zn(2+). Requires Fe(3+) as cofactor.

It is found in the cytoplasm. It catalyses the reaction 4-imidazolone-5-propanoate + H2O = N-formimidoyl-L-glutamate. It participates in amino-acid degradation; L-histidine degradation into L-glutamate; N-formimidoyl-L-glutamate from L-histidine: step 3/3. Its function is as follows. Catalyzes the hydrolytic cleavage of the carbon-nitrogen bond in imidazolone-5-propanoate to yield N-formimidoyl-L-glutamate. It is the third step in the universal histidine degradation pathway. This Streptococcus gordonii protein is Imidazolonepropionase (hutI).